We begin with the raw amino-acid sequence, 355 residues long: Neutral protease 2 homolog AFUB_100460 (355 aa).

The N-terminal stretch at methionine 1–alanine 19 is a signal peptide. A propeptide spanning residues leucine 20–arginine 172 is cleaved from the precursor. Disulfide bonds link cysteine 179/cysteine 251 and cysteine 258/cysteine 276. Histidine 300 contributes to the Zn(2+) binding site. Residue glutamate 301 is part of the active site. Zn(2+)-binding residues include histidine 304 and aspartate 315.

It belongs to the peptidase M35 family. Zn(2+) is required as a cofactor.

It localises to the secreted. It carries out the reaction Preferential cleavage of bonds with hydrophobic residues in P1'. Also 3-Asn-|-Gln-4 and 8-Gly-|-Ser-9 bonds in insulin B chain.. Secreted metalloproteinase that allows assimilation of proteinaceous substrates. Shows high activities on basic nuclear substrates such as histone and protamine. May be involved in virulence. This chain is Neutral protease 2 homolog AFUB_100460, found in Aspergillus fumigatus (strain CBS 144.89 / FGSC A1163 / CEA10) (Neosartorya fumigata).